Consider the following 871-residue polypeptide: Alanine--tRNA ligase (871 aa).

4 residues coordinate Zn(2+): H563, H567, C665, and H669.

The protein belongs to the class-II aminoacyl-tRNA synthetase family. It depends on Zn(2+) as a cofactor.

It is found in the cytoplasm. It catalyses the reaction tRNA(Ala) + L-alanine + ATP = L-alanyl-tRNA(Ala) + AMP + diphosphate. In terms of biological role, catalyzes the attachment of alanine to tRNA(Ala) in a two-step reaction: alanine is first activated by ATP to form Ala-AMP and then transferred to the acceptor end of tRNA(Ala). Also edits incorrectly charged Ser-tRNA(Ala) and Gly-tRNA(Ala) via its editing domain. The polypeptide is Alanine--tRNA ligase (Christiangramia forsetii (strain DSM 17595 / CGMCC 1.15422 / KT0803) (Gramella forsetii)).